The following is a 161-amino-acid chain: Aklanonic acid methyl ester cyclase DauD (161 aa).

Gln-106 provides a ligand contact to substrate. Residues 137-161 (WPTPEGWRPCPPPPRRRHDRSTDTP) form a disordered region.

The protein belongs to the polyketide cyclase DnrD family. As to quaternary structure, homotetramer.

It carries out the reaction methyl aklanonate = aklaviketone. Its pathway is antibiotic biosynthesis; daunorubicin biosynthesis. The protein operates within antibiotic biosynthesis; carminomycin biosynthesis. It functions in the pathway antibiotic biosynthesis; rhodomycin biosynthesis. It participates in antibiotic biosynthesis; aclacinomycin biosynthesis. Involved in the biosynthesis of aklavinone which is an important precursor common to the formation of the clinically significant anthracyclines such as carminomycin, daunorubicin (daunomycin), rhodomycin, aclacinomycin T (aklavin) and aclacinomycin A (aclarubicin). These compounds are aromatic polyketide antibiotics that exhibit high cytotoxicity and are widely applied in the chemotherapy of a variety of cancers. Catalyzes the cyclization of aklanonic acid methyl ester to yield aklaviketone. The chain is Aklanonic acid methyl ester cyclase DauD (dauD) from Streptomyces sp. (strain C5).